Reading from the N-terminus, the 179-residue chain is Large ribosomal subunit protein uL5 (179 aa).

This sequence belongs to the universal ribosomal protein uL5 family. As to quaternary structure, part of the 50S ribosomal subunit; part of the 5S rRNA/L5/L18/L25 subcomplex. Contacts the 5S rRNA and the P site tRNA. Forms a bridge to the 30S subunit in the 70S ribosome.

Its function is as follows. This is one of the proteins that bind and probably mediate the attachment of the 5S RNA into the large ribosomal subunit, where it forms part of the central protuberance. In the 70S ribosome it contacts protein S13 of the 30S subunit (bridge B1b), connecting the 2 subunits; this bridge is implicated in subunit movement. Contacts the P site tRNA; the 5S rRNA and some of its associated proteins might help stabilize positioning of ribosome-bound tRNAs. This Natranaerobius thermophilus (strain ATCC BAA-1301 / DSM 18059 / JW/NM-WN-LF) protein is Large ribosomal subunit protein uL5.